The sequence spans 882 residues: Liprin-beta-2 (882 aa).

Positions 101–303 (AASNETYQER…DKDRRIEELT (203 aa)) form a coiled coil. Residues S328, S362, and S386 each carry the phosphoserine modification. The interval 339–554 (RKWNTTNKSP…SRTRDTKGQK (216 aa)) is disordered. A compositionally biased stretch (basic and acidic residues) spans 388-399 (EDLRRESGDKCV). Composition is skewed to polar residues over residues 442–457 (PTAS…SQPK) and 481–495 (SSAS…QSPV). Phosphoserine is present on residues S502 and S518. A compositionally biased stretch (basic residues) spans 502 to 515 (SPKGIKKFWGKIRR). SAM domains are found at residues 564 to 628 (WSTE…INAK), 636 to 699 (LDHI…LHVN), and 724 to 789 (WSNH…KFNA).

Belongs to the liprin family. Liprin-beta subfamily. Forms homodimers and heterodimers. In terms of tissue distribution, expressed widely. Strong expression in liver, kidney, intestine, heart, lung and testis. Low expression in brain and thymus.

May regulate the disassembly of focal adhesions. Did not bind receptor-like tyrosine phosphatases type 2A. The polypeptide is Liprin-beta-2 (Ppfibp2) (Mus musculus (Mouse)).